The primary structure comprises 888 residues: C2H2 zinc finger transcription factor sltA (888 aa).

3 disordered regions span residues 1-78, 132-176, and 388-407; these read MSTS…QRSP, IDSQ…SSEN, and RSSM…ASAP. Polar residues-rich tracts occupy residues 23–32, 167–176, and 388–397; these read PSLSASTSIE, GLGTSLSSEN, and RSSMPSNREP. C2H2-type zinc fingers lie at residues 500-522 and 561-586; these read QKCK…EKTH and YKCK…EKAH. The disordered stretch occupies residues 589–663; the sequence is DYVRSKHNGR…PTQTGSGDFP (75 aa). Over residues 602–632 the composition is skewed to polar residues; sequence KASNGATPQTPSIATPSSKAQGITTPLTGSE.

It is found in the nucleus. In terms of biological role, transcription factor that contributes to azole resistance by coregulating the expression of the drug target erg11A and the drug efflux pump mdr1. Binds to the 5'-AGGCA-3' motif in the promoters of ergosterol biosynthesis and drug pump genes to regulate their expression. Is able to interact with the promoters of sltA, sltB, erg11A, erg13A, erg24A, mdr1, abcE and mfsC. Involved in antifungal drug resistance to azoles, terbinafine, and simvastatin but not amphotericin B or caspofungin. This is C2H2 zinc finger transcription factor sltA from Aspergillus fumigatus (strain CBS 144.89 / FGSC A1163 / CEA10) (Neosartorya fumigata).